A 307-amino-acid polypeptide reads, in one-letter code: Protoheme IX farnesyltransferase (307 aa).

Transmembrane regions (helical) follow at residues 28–48 (LVIF…NPIL), 50–70 (FTAI…NQWW), 99–117 (FGIL…AINW), 121–138 (IILA…TIWL), 146–166 (IVIG…AVTG), 173–193 (VLLF…LALF), 219–239 (ILVY…IGAT), 241–261 (AIYG…SVPV), and 278–298 (LFGF…ADRY).

Belongs to the UbiA prenyltransferase family. Protoheme IX farnesyltransferase subfamily.

The protein resides in the cell inner membrane. It catalyses the reaction heme b + (2E,6E)-farnesyl diphosphate + H2O = Fe(II)-heme o + diphosphate. The protein operates within porphyrin-containing compound metabolism; heme O biosynthesis; heme O from protoheme: step 1/1. In terms of biological role, converts heme B (protoheme IX) to heme O by substitution of the vinyl group on carbon 2 of heme B porphyrin ring with a hydroxyethyl farnesyl side group. The protein is Protoheme IX farnesyltransferase of Erythrobacter litoralis (strain HTCC2594).